A 115-amino-acid polypeptide reads, in one-letter code: Na(+)/H(+) antiporter subunit C1 (115 aa).

3 helical membrane passes run 1-21 (MEIL…YLIL), 28-48 (IIIG…TMGG), and 72-92 (LILT…VLAF).

Belongs to the CPA3 antiporters (TC 2.A.63) subunit C family. May form a heterooligomeric complex that consists of seven subunits: mnhA1, mnhB1, mnhC1, mnhD1, mnhE1, mnhF1 and mnhG1.

The protein localises to the cell membrane. Functionally, mnh complex is a Na(+)/H(+) antiporter involved in Na(+) excretion. This is Na(+)/H(+) antiporter subunit C1 (mnhC1) from Staphylococcus saprophyticus subsp. saprophyticus (strain ATCC 15305 / DSM 20229 / NCIMB 8711 / NCTC 7292 / S-41).